The sequence spans 156 residues: Ribosomal RNA large subunit methyltransferase H (156 aa).

S-adenosyl-L-methionine is bound by residues Leu73, Gly104, and 123–128; that span reads LSPLTL.

Belongs to the RNA methyltransferase RlmH family. As to quaternary structure, homodimer.

The protein resides in the cytoplasm. It catalyses the reaction pseudouridine(1915) in 23S rRNA + S-adenosyl-L-methionine = N(3)-methylpseudouridine(1915) in 23S rRNA + S-adenosyl-L-homocysteine + H(+). In terms of biological role, specifically methylates the pseudouridine at position 1915 (m3Psi1915) in 23S rRNA. This Edwardsiella ictaluri (strain 93-146) protein is Ribosomal RNA large subunit methyltransferase H.